Here is a 110-residue protein sequence, read N- to C-terminus: V-type proton ATPase subunit G1 (110 aa).

The residue at position 1 (Met1) is an N-acetylmethionine. Residues 60–80 form a disordered region; it reads KLEETSGDSGANVKRLEQETD.

It belongs to the V-ATPase G subunit family. V-ATPase is a heteromultimeric enzyme composed of a peripheral catalytic V1 complex (components A to H) attached to an integral membrane V0 proton pore complex (components: a, c, c'', d and e).

It is found in the cell membrane. It localises to the vacuole membrane. Its function is as follows. Catalytic subunit of the peripheral V1 complex of vacuolar ATPase (V-ATPase). V-ATPase is responsible for acidifying a variety of intracellular compartments in eukaryotic cells. In Arabidopsis thaliana (Mouse-ear cress), this protein is V-type proton ATPase subunit G1 (VHA-G1).